We begin with the raw amino-acid sequence, 339 residues long: Glycerol-3-phosphate dehydrogenase [NAD(P)+] (339 aa).

Residues S11, W12, and K109 each contribute to the NADPH site. Sn-glycerol 3-phosphate-binding residues include K109, G140, and S142. A144 is an NADPH binding site. Sn-glycerol 3-phosphate-binding residues include K195, D249, S259, R260, and N261. K195 serves as the catalytic Proton acceptor. R260 is a binding site for NADPH. NADPH-binding residues include V284 and E286.

It belongs to the NAD-dependent glycerol-3-phosphate dehydrogenase family.

Its subcellular location is the cytoplasm. The catalysed reaction is sn-glycerol 3-phosphate + NAD(+) = dihydroxyacetone phosphate + NADH + H(+). It carries out the reaction sn-glycerol 3-phosphate + NADP(+) = dihydroxyacetone phosphate + NADPH + H(+). It functions in the pathway membrane lipid metabolism; glycerophospholipid metabolism. Functionally, catalyzes the reduction of the glycolytic intermediate dihydroxyacetone phosphate (DHAP) to sn-glycerol 3-phosphate (G3P), the key precursor for phospholipid synthesis. In Lactobacillus acidophilus (strain ATCC 700396 / NCK56 / N2 / NCFM), this protein is Glycerol-3-phosphate dehydrogenase [NAD(P)+].